Here is a 137-residue protein sequence, read N- to C-terminus: Small ribosomal subunit protein uS12 (137 aa).

Residues methionine 1–proline 55 are disordered. Aspartate 102 is modified (3-methylthioaspartic acid). The tract at residues serine 118–asparagine 137 is disordered.

Belongs to the universal ribosomal protein uS12 family. In terms of assembly, part of the 30S ribosomal subunit. Contacts proteins S8 and S17. May interact with IF1 in the 30S initiation complex.

In terms of biological role, with S4 and S5 plays an important role in translational accuracy. Functionally, interacts with and stabilizes bases of the 16S rRNA that are involved in tRNA selection in the A site and with the mRNA backbone. Located at the interface of the 30S and 50S subunits, it traverses the body of the 30S subunit contacting proteins on the other side and probably holding the rRNA structure together. The combined cluster of proteins S8, S12 and S17 appears to hold together the shoulder and platform of the 30S subunit. This is Small ribosomal subunit protein uS12 from Staphylococcus aureus (strain Mu3 / ATCC 700698).